The following is a 260-amino-acid chain: 3'-5' ssDNA/RNA exonuclease TatD (260 aa).

A divalent metal cation contacts are provided by Glu-91, His-127, and His-152.

It belongs to the metallo-dependent hydrolases superfamily. TatD-type hydrolase family. TatD subfamily. In terms of assembly, monomer. The cofactor is Mg(2+).

It localises to the cytoplasm. Functionally, 3'-5' exonuclease that prefers single-stranded DNA and RNA. May play a role in the H(2)O(2)-induced DNA damage repair. The polypeptide is 3'-5' ssDNA/RNA exonuclease TatD (Enterobacter sp. (strain 638)).